A 429-amino-acid polypeptide reads, in one-letter code: Enolase (429 aa).

Gln163 contacts (2R)-2-phosphoglycerate. Glu205 functions as the Proton donor in the catalytic mechanism. The Mg(2+) site is built by Asp242, Glu285, and Asp312. Residues Lys337, Arg366, Ser367, and Lys388 each contribute to the (2R)-2-phosphoglycerate site. The active-site Proton acceptor is the Lys337.

Belongs to the enolase family. Mg(2+) is required as a cofactor.

The protein localises to the cytoplasm. It localises to the secreted. Its subcellular location is the cell surface. It carries out the reaction (2R)-2-phosphoglycerate = phosphoenolpyruvate + H2O. It participates in carbohydrate degradation; glycolysis; pyruvate from D-glyceraldehyde 3-phosphate: step 4/5. In terms of biological role, catalyzes the reversible conversion of 2-phosphoglycerate (2-PG) into phosphoenolpyruvate (PEP). It is essential for the degradation of carbohydrates via glycolysis. This is Enolase from Azoarcus sp. (strain BH72).